The chain runs to 341 residues: MHIVLEFFLVTFRVLWAFVLAAGKWLLRPKDKSVAGQVCLITGAGSGLGRLFALEFARRRAQLVLWDINSQSNEETAEMVRNIYRELEAEDSARRANSSAEEEVLPCCNLKVYTYTCDVGKRESVYSTAERVRREVGDVYLLLNNAGVVSGHHLLECPDELIERTMMVNCHAHFWTTKAFLPKMMELNHGHIVSVASSLGLFSTAGVEDYCASKFGVVGFHESLSHEIKASDKDGIKTTLVCPYLVDTGMFRGCRIRKEIEPFLPPLKPDYCVKQAMRAILTDQPMICTPRLMYIVTCMKSILPFEAVVCMYRFLGADKCMYPFIAQRKQATNNNEAKNGI.

The chain crosses the membrane as a helical; Signal-anchor span at residues 3–23 (IVLEFFLVTFRVLWAFVLAAG). An NADP(+)-binding site is contributed by 40 to 64 (LITGAGSGLGRLFALEFARRRAQLV). S197 provides a ligand contact to substrate. Y210 acts as the Proton acceptor in catalysis.

This sequence belongs to the short-chain dehydrogenases/reductases (SDR) family.

The protein localises to the microsome membrane. Its subcellular location is the endoplasmic reticulum membrane. The enzyme catalyses all-trans-retinol + NADP(+) = all-trans-retinal + NADPH + H(+). Its pathway is cofactor metabolism; retinol metabolism. Its function is as follows. Retinol dehydrogenase with a clear preference for NADP. Converts all-trans-retinol to all-trans-retinal. Has no detectable activity towards 11-cis-retinol, 9-cis-retinol and 13-cis-retinol. In Xenopus laevis (African clawed frog), this protein is Retinol dehydrogenase 10-A (rdh10-a).